The following is a 245-amino-acid chain: MNENLQDLISTKLAAAIANPLFPAVDSQLRSGRHIGQEHLDNYAFLADFQNELDGFYRRYNVELIRAPEGFFYLRPKATTLIARSVLSELEMLVGKVLCYLYLSPERLAQQGIFTVQEVYDELLNLADEAKLLKAVNLRASGSDLDKQKLAEKVRAALGRLRRLGMLYTVGEQNSGKFTISESVFRFGAEVRAGDDPIEAQLRLIRDGEAATPESIAAEKATADDESAVSNEEDFEYDDNQEGAE.

The interval 213–245 (PESIAAEKATADDESAVSNEEDFEYDDNQEGAE) is disordered. The span at 224-245 (DDESAVSNEEDFEYDDNQEGAE) shows a compositional bias: acidic residues.

The protein belongs to the MukE family. Interacts, and probably forms a ternary complex, with MukF and MukB. The complex formation is stimulated by calcium or magnesium.

Its subcellular location is the cytoplasm. It is found in the nucleoid. Functionally, involved in chromosome condensation, segregation and cell cycle progression. May participate in facilitating chromosome segregation by condensation DNA from both sides of a centrally located replisome during cell division. Probably acts via its interaction with MukB and MukF. The protein is Chromosome partition protein MukE of Actinobacillus succinogenes (strain ATCC 55618 / DSM 22257 / CCUG 43843 / 130Z).